Here is a 669-residue protein sequence, read N- to C-terminus: Sodium-dependent phosphate transporter (669 aa).

Residues Met-1–Asp-6 lie on the Extracellular side of the membrane. Residues Met-7 to Ala-27 form a helical membrane-spanning segment. Residues Asn-28–Lys-47 lie on the Cytoplasmic side of the membrane. A helical transmembrane segment spans residues Ala-48–Thr-68. The Extracellular portion of the chain corresponds to Asp-69–Glu-86. A helical membrane pass occupies residues Phe-87 to Thr-107. Position 108 (Arg-108) is a topological domain, cytoplasmic. The chain crosses the membrane as a helical span at residues Ala-109–Ala-129. Topologically, residues Thr-130–Asn-143 are extracellular. Residues Ile-144–Thr-164 traverse the membrane as a helical segment. Residues Val-165–Phe-186 lie on the Cytoplasmic side of the membrane. The chain crosses the membrane as a helical span at residues Leu-187–Ile-207. The Extracellular segment spans residues Asn-208–Ser-239. Residues Ile-240–Ile-260 form a helical membrane-spanning segment. Topologically, residues Tyr-261–Lys-502 are cytoplasmic. Over residues Ala-311–Val-335 the composition is skewed to polar residues. 2 disordered regions span residues Ala-311–Ala-364 and Thr-392–Glu-444. The segment covering Lys-342–Lys-352 has biased composition (basic and acidic residues). A compositionally biased stretch (low complexity) spans Asn-395–Gly-433. A helical transmembrane segment spans residues Val-503 to Gly-523. Residues Tyr-524–Gly-542 lie on the Extracellular side of the membrane. Residues Phe-543–Leu-563 traverse the membrane as a helical segment. At Ser-564 to Arg-632 the chain is on the cytoplasmic side. The helical transmembrane segment at Thr-633 to Tyr-653 threads the bilayer. Residues Ser-654–Val-669 lie on the Extracellular side of the membrane.

It belongs to the inorganic phosphate transporter (PiT) (TC 2.A.20) family.

The protein resides in the cell membrane. The catalysed reaction is 2 Na(+)(out) + phosphate(out) = 2 Na(+)(in) + phosphate(in). Sodium-phosphate symporter which preferentially transports the monovalent form of phosphate with a stoichiometry of two sodium ions per phosphate ion. The chain is Sodium-dependent phosphate transporter from Plasmodium falciparum.